The chain runs to 47 residues: uncharacterized protein (47 aa).

The segment at 22 to 47 (VGPRTKRANQASPPVGRHSSRLMCPG) is disordered.

This is an uncharacterized protein from Saccharomyces cerevisiae (strain ATCC 204508 / S288c) (Baker's yeast).